The primary structure comprises 272 residues: MTDMYSLFVAFILGVVEGLTEFLPVSSTGHMIIVGELLGFTGDKAKTFEVIIQLGSILAVVVVFWRRLFGLIGIHFGAVPHEGKTNGHLTLGHILLAMIPAVILGLAFHDVIKALFDPKSVMYALVAGGVLLLAAEWLKPKNPKAVGLDDITYRQAFAIGCFQCLALWPGFSRSGATISGGMLVGVNRYAASEFSFILAVPMMIGASGLDLYKSLHFLTLGDLPMFAVGFITAFIVALIAIKTFLSLIKRISFVPFAIYRFIVAAVVYWVFM.

8 helical membrane passes run 5–25 (YSLFVAFILGVVEGLTEFLPV), 45–65 (AKTFEVIIQLGSILAVVVVFW), 88–108 (HLTLGHILLAMIPAVILGLAF), 114–134 (ALFDPKSVMYALVAGGVLLLA), 153–172 (YRQAFAIGCFQCLALWPGFS), 189–209 (YAASEFSFILAVPMMIGASGL), 221–241 (GDLPMFAVGFITAFIVALIAI), and 251–271 (ISFVPFAIYRFIVAAVVYWVF).

Belongs to the UppP family.

The protein localises to the cell inner membrane. It carries out the reaction di-trans,octa-cis-undecaprenyl diphosphate + H2O = di-trans,octa-cis-undecaprenyl phosphate + phosphate + H(+). Functionally, catalyzes the dephosphorylation of undecaprenyl diphosphate (UPP). Confers resistance to bacitracin. In Yersinia pseudotuberculosis serotype IB (strain PB1/+), this protein is Undecaprenyl-diphosphatase.